A 419-amino-acid chain; its full sequence is Protein-lysine N-methyltransferase EFM2 (419 aa).

S-adenosyl-L-methionine is bound by residues Trp-222, 261–263 (GAG), Asp-290, Trp-318, and Ala-340.

This sequence belongs to the class I-like SAM-binding methyltransferase superfamily. METTL21 family.

It localises to the cytoplasm. S-adenosyl-L-methionine-dependent protein-lysine N-methyltransferase that mono- and dimethylates elongation factor 2 (EFT1/EFT2) at 'Lys-613' and methylates elongation factor 3A (YEF3). The polypeptide is Protein-lysine N-methyltransferase EFM2 (Saccharomyces cerevisiae (strain ATCC 204508 / S288c) (Baker's yeast)).